Consider the following 443-residue polypeptide: MIKERRTELVEGFRHSVPYINTHRGKTFVIMLGGEAIEHDNFSSIVNDIGLLHSLGIRLVVVYGARPQIDANLAAHHHEPIYHKNTRVTDAKTLELVKQAAGLLQLDITARLSMSLNNTPLQGAHINVVSGNFTIAQPLGVDDGVDYCHSGRIRRIDEDAINRQLDNGAIVLIGPVAVSVTGESFNLTSEEIATQLAVKLKAEKMIGFCSSQGVTNSKGDVISELFPNEAQARVEELEAQGDYNSGTVRFLRGAVKACRSGVRRCHLISYQEDGTLLQELFSREGIGTQIVMESAEQIRRATINDIGGILELIRPLEQQGILVRRSREQLEMEIDKFTIIQRDNMTIACAALYPFVEEKIGEMACVAVHPDYRSSSRGEILLERIAAQARQMGLSKLFVLTTRSIHWFQERGFTPVDIELLPESKKKMYNYQRRSKVLIADLG.

The 141-residue stretch at Glu296–Lys436 folds into the N-acetyltransferase domain.

The protein belongs to the acetyltransferase family. ArgA subfamily. In terms of assembly, homohexamer.

It is found in the cytoplasm. It catalyses the reaction L-glutamate + acetyl-CoA = N-acetyl-L-glutamate + CoA + H(+). It functions in the pathway amino-acid biosynthesis; L-arginine biosynthesis; N(2)-acetyl-L-ornithine from L-glutamate: step 1/4. In Salmonella arizonae (strain ATCC BAA-731 / CDC346-86 / RSK2980), this protein is Amino-acid acetyltransferase.